The sequence spans 296 residues: uncharacterized protein (296 aa).

A helical transmembrane segment spans residues 7 to 26; it reads CFSLVCALGASTYLLWRGWL.

It localises to the membrane. This is an uncharacterized protein from Treponema pallidum (strain Nichols).